The chain runs to 116 residues: Small ribosomal subunit protein bS16 (116 aa).

A disordered region spans residues 88–116 (RNNPKAAVPGKRMAELAKKKADRAAASAE). Positions 99–110 (RMAELAKKKADR) are enriched in basic and acidic residues.

This sequence belongs to the bacterial ribosomal protein bS16 family.

The chain is Small ribosomal subunit protein bS16 from Cereibacter sphaeroides (strain ATCC 17029 / ATH 2.4.9) (Rhodobacter sphaeroides).